A 513-amino-acid polypeptide reads, in one-letter code: Putative ATP-dependent RNA helicase QP509L (513 aa).

The Helicase ATP-binding domain maps to 110–262 (KKLLSPYGRF…KIIIHHLGQP (153 aa)). 123–130 (LNTGLGKT) serves as a coordination point for ATP. Residues 215–218 (DEAH) carry the DEAH box motif.

The protein belongs to the DEAD box helicase family. DEAH subfamily.

The enzyme catalyses ATP + H2O = ADP + phosphate + H(+). This chain is Putative ATP-dependent RNA helicase QP509L, found in Ornithodoros (relapsing fever ticks).